Reading from the N-terminus, the 555-residue chain is Glutamate--tRNA ligase (555 aa).

The short motif at 100 to 110 (PNPSGPLHIGH) is the 'HIGH' region element.

It belongs to the class-I aminoacyl-tRNA synthetase family. Glutamate--tRNA ligase type 2 subfamily.

It localises to the cytoplasm. It catalyses the reaction tRNA(Glu) + L-glutamate + ATP = L-glutamyl-tRNA(Glu) + AMP + diphosphate. Catalyzes the attachment of glutamate to tRNA(Glu) in a two-step reaction: glutamate is first activated by ATP to form Glu-AMP and then transferred to the acceptor end of tRNA(Glu). The sequence is that of Glutamate--tRNA ligase from Methanococcus maripaludis (strain C7 / ATCC BAA-1331).